The sequence spans 448 residues: C4-dicarboxylate transport protein (448 aa).

The next 9 membrane-spanning stretches (helical) occupy residues 13-33, 49-69, 81-101, 149-169, 193-213, 227-247, 294-314, 336-356, and 357-377; these read SLYA…HFYP, LIKM…IAGM, LALL…LLVV, AFAK…GFAL, IVGI…AFTI, LMGA…GIVS, VVGL…SIYL, TLLA…GSGF, and IVLA…LALI.

It belongs to the dicarboxylate/amino acid:cation symporter (DAACS) (TC 2.A.23) family.

The protein localises to the cell inner membrane. Functionally, responsible for the transport of dicarboxylates such as succinate, fumarate, and malate from the periplasm across the membrane. The sequence is that of C4-dicarboxylate transport protein from Albidiferax ferrireducens (strain ATCC BAA-621 / DSM 15236 / T118) (Rhodoferax ferrireducens).